The primary structure comprises 111 residues: MFSTIALFWALCLVCIINMMRYFSSLRALLSILRQSDPLLYQSVDGNGFFTTHGQLNKQIRLVNYINSQRYLDHHDPEVVLRCERLRKQFILTSSLSGLVVICLISMLIWY.

Transmembrane regions (helical) follow at residues 1-21 (MFSTIALFWALCLVCIINMMR) and 90-110 (FILTSSLSGLVVICLISMLIW).

Belongs to the universal stress protein B family.

Its subcellular location is the cell inner membrane. The polypeptide is Universal stress protein B (Photorhabdus laumondii subsp. laumondii (strain DSM 15139 / CIP 105565 / TT01) (Photorhabdus luminescens subsp. laumondii)).